A 452-amino-acid polypeptide reads, in one-letter code: Cobyrinate a,c-diamide synthase (452 aa).

The GATase cobBQ-type domain maps to Arg248–Leu441. Catalysis depends on Cys330, which acts as the Nucleophile.

This sequence belongs to the CobB/CbiA family. The cofactor is Mg(2+).

The catalysed reaction is cob(II)yrinate + 2 L-glutamine + 2 ATP + 2 H2O = cob(II)yrinate a,c diamide + 2 L-glutamate + 2 ADP + 2 phosphate + 2 H(+). Its pathway is cofactor biosynthesis; adenosylcobalamin biosynthesis; cob(II)yrinate a,c-diamide from sirohydrochlorin (anaerobic route): step 10/10. In terms of biological role, catalyzes the ATP-dependent amidation of the two carboxylate groups at positions a and c of cobyrinate, using either L-glutamine or ammonia as the nitrogen source. This chain is Cobyrinate a,c-diamide synthase, found in Listeria monocytogenes serotype 4b (strain F2365).